A 119-amino-acid chain; its full sequence is Large ribosomal subunit protein uL18 (119 aa).

This sequence belongs to the universal ribosomal protein uL18 family. In terms of assembly, part of the 50S ribosomal subunit; part of the 5S rRNA/L5/L18/L25 subcomplex. Contacts the 5S and 23S rRNAs.

Its function is as follows. This is one of the proteins that bind and probably mediate the attachment of the 5S RNA into the large ribosomal subunit, where it forms part of the central protuberance. This is Large ribosomal subunit protein uL18 from Endomicrobium trichonymphae.